Here is a 166-residue protein sequence, read N- to C-terminus: Seed allergenic protein RAG2 (166 aa).

Positions 1 to 26 (MASNKVVFSALLLIIVSVLAATATMA) are cleaved as a signal peptide. Disulfide bonds link Cys-41-Cys-93, Cys-55-Cys-81, Cys-63-Cys-125, Cys-82-Cys-141, and Cys-95-Cys-153. A glycan (N-linked (GlcNAc...) asparagine) is linked at Asn-147.

It belongs to the cereal trypsin/alpha-amylase inhibitor family. In terms of processing, five disulfide bonds are present.

The protein resides in the secreted. Functionally, seed storage protein. The sequence is that of Seed allergenic protein RAG2 (RAG2) from Oryza sativa subsp. japonica (Rice).